The chain runs to 120 residues: Ribosome-binding factor A (120 aa).

Belongs to the RbfA family. Monomer. Binds 30S ribosomal subunits, but not 50S ribosomal subunits or 70S ribosomes.

It localises to the cytoplasm. Its function is as follows. One of several proteins that assist in the late maturation steps of the functional core of the 30S ribosomal subunit. Associates with free 30S ribosomal subunits (but not with 30S subunits that are part of 70S ribosomes or polysomes). Required for efficient processing of 16S rRNA. May interact with the 5'-terminal helix region of 16S rRNA. This chain is Ribosome-binding factor A, found in Chlamydia felis (strain Fe/C-56) (Chlamydophila felis).